Consider the following 579-residue polypeptide: V-type ATP synthase alpha chain (579 aa).

Residue 227 to 234 participates in ATP binding; the sequence is GGFGTGKT.

The protein belongs to the ATPase alpha/beta chains family.

It catalyses the reaction ATP + H2O + 4 H(+)(in) = ADP + phosphate + 5 H(+)(out). Functionally, produces ATP from ADP in the presence of a proton gradient across the membrane. The V-type alpha chain is a catalytic subunit. This chain is V-type ATP synthase alpha chain, found in Anaeromyxobacter dehalogenans (strain 2CP-1 / ATCC BAA-258).